The chain runs to 452 residues: Sodium-coupled neutral amino acid transporter 7 (452 aa).

11 helical membrane passes run Ala-46–Phe-66, Ala-74–Ala-94, Leu-120–Ile-140, Phe-168–Ser-188, Phe-195–Pro-215, Val-234–Gly-256, Ile-272–Phe-292, Ile-309–Leu-329, Val-361–Ile-381, Ile-385–Ile-405, and Ser-419–Gly-439.

Belongs to the amino acid/polyamine transporter 2 family.

It is found in the lysosome membrane. The protein resides in the cell projection. Its subcellular location is the axon. The catalysed reaction is L-asparagine(in) + Na(+)(in) = L-asparagine(out) + Na(+)(out). The enzyme catalyses L-glutamine(in) + Na(+)(in) = L-glutamine(out) + Na(+)(out). In terms of biological role, symporter that selectively cotransports sodium ions and amino acids, such as L-glutamine and L-asparagine from the lysosome into the cytoplasm and may participates in mTORC1 activation. The transport activity requires an acidic lysosomal lumen. In Xenopus laevis (African clawed frog), this protein is Sodium-coupled neutral amino acid transporter 7.